We begin with the raw amino-acid sequence, 194 residues long: Dof zinc finger protein DOF1.7 (194 aa).

The Dof-type zinc finger occupies 33–87 (LKCPRCDSPNTKFCYYNNYNLSQPRHFCKNCRRYWTKGGALRNIPVGGGTRKSNK). Residues C35, C38, C60, and C63 each coordinate Zn(2+). The segment at 74–125 (RNIPVGGGTRKSNKRSGSSPSSNLKNQTVAEKPDHHGSGSEEKEERVSGQEM) is disordered. The segment covering 88 to 99 (RSGSSPSSNLKN) has biased composition (low complexity). Residues 104–121 (EKPDHHGSGSEEKEERVS) show a composition bias toward basic and acidic residues.

It is found in the nucleus. Transcription factor that binds specifically to a 5'-AA[AG]G-3' consensus core sequence. The polypeptide is Dof zinc finger protein DOF1.7 (DOF1.7) (Arabidopsis thaliana (Mouse-ear cress)).